The sequence spans 109 residues: Sperm-specific class P protein 16 (109 aa).

In terms of domain architecture, MSP spans 2–109; that stretch reads SLTADPPACT…TVTIPMSATA (108 aa).

As to expression, expressed at higher level in testis.

In Caenorhabditis elegans, this protein is Sperm-specific class P protein 16 (ssp-16).